The sequence spans 426 residues: Enolase (426 aa).

Residue Gln-163 coordinates (2R)-2-phosphoglycerate. Catalysis depends on Glu-205, which acts as the Proton donor. Residues Asp-242, Glu-286, and Asp-313 each contribute to the Mg(2+) site. 4 residues coordinate (2R)-2-phosphoglycerate: Lys-338, Arg-367, Ser-368, and Lys-389. The active-site Proton acceptor is the Lys-338.

Belongs to the enolase family. Mg(2+) is required as a cofactor.

The protein resides in the cytoplasm. It is found in the secreted. Its subcellular location is the cell surface. The enzyme catalyses (2R)-2-phosphoglycerate = phosphoenolpyruvate + H2O. It functions in the pathway carbohydrate degradation; glycolysis; pyruvate from D-glyceraldehyde 3-phosphate: step 4/5. Catalyzes the reversible conversion of 2-phosphoglycerate (2-PG) into phosphoenolpyruvate (PEP). It is essential for the degradation of carbohydrates via glycolysis. This is Enolase from Helicobacter pylori (strain HPAG1).